Consider the following 260-residue polypeptide: Small ribosomal subunit protein eS1 (260 aa).

The span at Met1–Lys18 shows a compositional bias: basic residues. Positions Met1–Ala20 are disordered.

Belongs to the eukaryotic ribosomal protein eS1 family. As to quaternary structure, component of the small ribosomal subunit. Mature ribosomes consist of a small (40S) and a large (60S) subunit. The 40S subunit contains about 33 different proteins and 1 molecule of RNA (18S). The 60S subunit contains about 49 different proteins and 3 molecules of RNA (25S, 5.8S and 5S).

Its subcellular location is the cytoplasm. The polypeptide is Small ribosomal subunit protein eS1 (Ostreococcus lucimarinus (strain CCE9901)).